Consider the following 510-residue polypeptide: Cytochrome c-552 (510 aa).

Positions 1-50 are cleaved as a signal peptide; it reads MVVFLFILYRQSDLKFKSMNGVIIVNTLKKRLFVATTMIWGLSVTLPVLA. Position 124 (His124) interacts with heme c. Residues Cys152, Cys155, and Lys156 each contribute to the heme site. Residues Cys190, Cys193, His194, Cys239, Cys242, and His243 each coordinate heme c. Positions 245, 246, 291, and 293 each coordinate Ca(2+). Tyr246 lines the substrate pocket. Residue His294 participates in substrate binding. The heme c site is built by His305, Cys312, Cys315, His316, His331, Cys344, Cys347, His348, and His423.

The protein belongs to the cytochrome c-552 family. It depends on Ca(2+) as a cofactor. Heme c is required as a cofactor.

The protein localises to the periplasm. The enzyme catalyses 6 Fe(III)-[cytochrome c] + NH4(+) + 2 H2O = 6 Fe(II)-[cytochrome c] + nitrite + 8 H(+). It participates in nitrogen metabolism; nitrate reduction (assimilation). In terms of biological role, catalyzes the reduction of nitrite to ammonia, consuming six electrons in the process. The sequence is that of Cytochrome c-552 from Pasteurella multocida (strain Pm70).